Here is a 449-residue protein sequence, read N- to C-terminus: Deoxyguanosinetriphosphate triphosphohydrolase-like protein (449 aa).

A disordered region spans residues 1–27; sequence MTSSVWQERRHGEDKQRRNDHRSPYQR. Positions 7–27 are enriched in basic and acidic residues; sequence QERRHGEDKQRRNDHRSPYQR. The HD domain occupies 59–255; the sequence is RLTHSLEVSQ…MELADDIAYA (197 aa).

The protein belongs to the dGTPase family. Type 2 subfamily.

The sequence is that of Deoxyguanosinetriphosphate triphosphohydrolase-like protein from Shewanella baltica (strain OS195).